The following is a 323-amino-acid chain: Glucokinase (323 aa).

ATP is bound at residue G8–T13.

Belongs to the bacterial glucokinase family.

It localises to the cytoplasm. It carries out the reaction D-glucose + ATP = D-glucose 6-phosphate + ADP + H(+). This chain is Glucokinase, found in Yersinia enterocolitica serotype O:8 / biotype 1B (strain NCTC 13174 / 8081).